A 106-amino-acid chain; its full sequence is Putative double-stranded DNA mimic protein VV1228 (106 aa).

Belongs to the putative dsDNA mimic protein family.

May act as a double-stranded DNA (dsDNA) mimic. Probably regulates the activity of a dsDNA-binding protein. The chain is Putative double-stranded DNA mimic protein VV1228 from Vibrio vulnificus (strain YJ016).